A 298-amino-acid polypeptide reads, in one-letter code: Putative S-adenosyl-L-methionine-dependent methyltransferase MAV_0778 (298 aa).

S-adenosyl-L-methionine contacts are provided by residues aspartate 124 and 153–154 (DL).

This sequence belongs to the UPF0677 family.

In terms of biological role, exhibits S-adenosyl-L-methionine-dependent methyltransferase activity. This is Putative S-adenosyl-L-methionine-dependent methyltransferase MAV_0778 from Mycobacterium avium (strain 104).